We begin with the raw amino-acid sequence, 456 residues long: Bifunctional protein GlmU (456 aa).

Positions M1–R229 are pyrophosphorylase. UDP-N-acetyl-alpha-D-glucosamine-binding positions include L11 to G14, K25, Q76, G81 to T82, Y103 to D105, G140, E154, N169, and N227. D105 is a binding site for Mg(2+). N227 lines the Mg(2+) pocket. Residues L230 to A250 are linker. An N-acetyltransferase region spans residues G251–K456. 2 residues coordinate UDP-N-acetyl-alpha-D-glucosamine: R333 and K351. H363 functions as the Proton acceptor in the catalytic mechanism. The UDP-N-acetyl-alpha-D-glucosamine site is built by Y366 and N377. Residues A380, N386–Y387, S405, A423, and R440 contribute to the acetyl-CoA site.

It in the N-terminal section; belongs to the N-acetylglucosamine-1-phosphate uridyltransferase family. In the C-terminal section; belongs to the transferase hexapeptide repeat family. As to quaternary structure, homotrimer. The cofactor is Mg(2+).

The protein localises to the cytoplasm. The enzyme catalyses alpha-D-glucosamine 1-phosphate + acetyl-CoA = N-acetyl-alpha-D-glucosamine 1-phosphate + CoA + H(+). It catalyses the reaction N-acetyl-alpha-D-glucosamine 1-phosphate + UTP + H(+) = UDP-N-acetyl-alpha-D-glucosamine + diphosphate. The protein operates within nucleotide-sugar biosynthesis; UDP-N-acetyl-alpha-D-glucosamine biosynthesis; N-acetyl-alpha-D-glucosamine 1-phosphate from alpha-D-glucosamine 6-phosphate (route II): step 2/2. It functions in the pathway nucleotide-sugar biosynthesis; UDP-N-acetyl-alpha-D-glucosamine biosynthesis; UDP-N-acetyl-alpha-D-glucosamine from N-acetyl-alpha-D-glucosamine 1-phosphate: step 1/1. Its pathway is bacterial outer membrane biogenesis; LPS lipid A biosynthesis. Its function is as follows. Catalyzes the last two sequential reactions in the de novo biosynthetic pathway for UDP-N-acetylglucosamine (UDP-GlcNAc). The C-terminal domain catalyzes the transfer of acetyl group from acetyl coenzyme A to glucosamine-1-phosphate (GlcN-1-P) to produce N-acetylglucosamine-1-phosphate (GlcNAc-1-P), which is converted into UDP-GlcNAc by the transfer of uridine 5-monophosphate (from uridine 5-triphosphate), a reaction catalyzed by the N-terminal domain. The protein is Bifunctional protein GlmU of Escherichia coli O157:H7 (strain EC4115 / EHEC).